We begin with the raw amino-acid sequence, 417 residues long: Snake venom metalloproteinase kistomin (417 aa).

An N-terminal signal peptide occupies residues 1-20 (MIEVLLVTICLAAFPYQGSS). Positions 21 to 189 (IILESGNVND…KKPFRLNLTP (169 aa)) are excised as a propeptide. In terms of domain architecture, Peptidase M12B spans 197–391 (AKVYLVIVAD…RKPECLFKKP (195 aa)). 3 cysteine pairs are disulfide-bonded: cysteine 308–cysteine 386, cysteine 348–cysteine 370, and cysteine 350–cysteine 353. Histidine 333 serves as a coordination point for Zn(2+). Glutamate 334 is a catalytic residue. Residues histidine 337 and histidine 343 each contribute to the Zn(2+) site. A propeptide spanning residues 392–417 (LRTDTVSTPVSGNEPLEVITMDDFYA) is cleaved from the precursor.

The protein belongs to the venom metalloproteinase (M12B) family. P-I subfamily. Monomer. It depends on Zn(2+) as a cofactor. In terms of tissue distribution, expressed by the venom gland.

The protein localises to the secreted. Inhibited by EDTA, and O-phenanthrolene. In terms of biological role, snake venom zinc metalloprotease that inhibits platelet aggregation by binding specifically to platelet glycoprotein VI (GP6) and platelet glycoprotein Ib alpha (GP1BA). It inhibits the interaction between collagen and platelet GP6 by cleaving GP6 (at '225-Glu-|-Ala-226' and '238-Val-|-Phe-239' bonds), and inhibits vWF-induced platelet aggregation by cleaving GP1BA and vWF. Cleavage of GP1BA occurs at two distinct sites to generate two soluble fragments. It also cleaves alpha- (FGA) and subsequently the gamma-chain (FGG) of fibrinogen, leaving the beta-chain unaffected. It also inhibits collagen-, convulxin- and ristocetin-induced platelet aggregation. It blocks the adhesion of platelet to immobilized collagen, but only exerts a slight inhibition to fibrinogen. In vivo, it exerts potent antithrombotic effect. The protein is Snake venom metalloproteinase kistomin of Calloselasma rhodostoma (Malayan pit viper).